The primary structure comprises 493 residues: Xaa-Pro dipeptidase (493 aa).

Alanine 2 is modified (N-acetylalanine). The residue at position 167 (serine 167) is a Phosphoserine. Residue histidine 255 participates in a dipeptide binding. The Mn(2+) site is built by aspartate 276, aspartate 287, and histidine 370. Aspartate 287 contributes to the a dipeptide binding site. Histidine 377 and arginine 398 together coordinate a dipeptide. Mn(2+) is bound by residues glutamate 412 and glutamate 452.

This sequence belongs to the peptidase M24B family. Eukaryotic-type prolidase subfamily. Homodimer. Mn(2+) serves as cofactor.

It catalyses the reaction Xaa-L-Pro dipeptide + H2O = an L-alpha-amino acid + L-proline. Its activity is regulated as follows. Specifically inhibited by the pseudodipeptide CQ31. Inhibition by CQ31 indirectly activates the CARD8 inflammasome: dipeptide accumulation following PEPD inactivation weaky inhibit dipeptidyl peptidases DDP8 and DPP9, relieving DPP8- and/or DPP9-mediated inhibition of CARD8. In terms of biological role, dipeptidase that catalyzes the hydrolysis of dipeptides with a prolyl (Xaa-Pro) or hydroxyprolyl residue in the C-terminal position. The preferred dipeptide substrate is Gly-Pro, but other Xaa-Pro dipeptides, such as Ala-Pro, Met-Pro, Phe-Pro, Val-Pro and Leu-Pro, can be cleaved. Plays an important role in collagen metabolism because the high level of iminoacids in collagen. The sequence is that of Xaa-Pro dipeptidase from Homo sapiens (Human).